The sequence spans 142 residues: Small ribosomal subunit protein uS12 (142 aa).

Belongs to the universal ribosomal protein uS12 family. In terms of assembly, part of the 30S ribosomal subunit.

In terms of biological role, with S4 and S5 plays an important role in translational accuracy. Located at the interface of the 30S and 50S subunits. The sequence is that of Small ribosomal subunit protein uS12 from Thermoplasma volcanium (strain ATCC 51530 / DSM 4299 / JCM 9571 / NBRC 15438 / GSS1).